The following is a 493-amino-acid chain: Glutamyl-tRNA(Gln) amidotransferase subunit A (493 aa).

Catalysis depends on charge relay system residues K79 and S159. The Acyl-ester intermediate role is filled by S183.

The protein belongs to the amidase family. GatA subfamily. Heterotrimer of A, B and C subunits.

The catalysed reaction is L-glutamyl-tRNA(Gln) + L-glutamine + ATP + H2O = L-glutaminyl-tRNA(Gln) + L-glutamate + ADP + phosphate + H(+). Allows the formation of correctly charged Gln-tRNA(Gln) through the transamidation of misacylated Glu-tRNA(Gln) in organisms which lack glutaminyl-tRNA synthetase. The reaction takes place in the presence of glutamine and ATP through an activated gamma-phospho-Glu-tRNA(Gln). The protein is Glutamyl-tRNA(Gln) amidotransferase subunit A of Brucella suis biovar 1 (strain 1330).